Here is a 630-residue protein sequence, read N- to C-terminus: Chaperone protein HtpG (630 aa).

Residues 1 to 339 (MKGQETRGFQ…SNDLPLNVSR (339 aa)) are a; substrate-binding. The tract at residues 340-555 (EILQDNSITR…VDEMSTQMAK (216 aa)) is b. The interval 556–630 (LFAAAGQQVP…MNQLLLSEKA (75 aa)) is c.

Belongs to the heat shock protein 90 family. As to quaternary structure, homodimer.

The protein resides in the cytoplasm. Functionally, molecular chaperone. Has ATPase activity. The sequence is that of Chaperone protein HtpG from Photorhabdus laumondii subsp. laumondii (strain DSM 15139 / CIP 105565 / TT01) (Photorhabdus luminescens subsp. laumondii).